A 355-amino-acid polypeptide reads, in one-letter code: Elongation factor Ts (355 aa).

The involved in Mg(2+) ion dislocation from EF-Tu stretch occupies residues 82-85; sequence TDFV.

Belongs to the EF-Ts family.

Its subcellular location is the cytoplasm. Its function is as follows. Associates with the EF-Tu.GDP complex and induces the exchange of GDP to GTP. It remains bound to the aminoacyl-tRNA.EF-Tu.GTP complex up to the GTP hydrolysis stage on the ribosome. This Helicobacter pylori (strain P12) protein is Elongation factor Ts.